A 57-amino-acid chain; its full sequence is UPF0391 membrane protein IL0696 (57 aa).

Transmembrane regions (helical) follow at residues Trp-4–Ala-24 and Ala-28–Val-48.

Belongs to the UPF0391 family.

The protein localises to the cell membrane. In Idiomarina loihiensis (strain ATCC BAA-735 / DSM 15497 / L2-TR), this protein is UPF0391 membrane protein IL0696.